Consider the following 311-residue polypeptide: Methionyl-tRNA formyltransferase (311 aa).

Residue 109–112 (SLLP) coordinates (6S)-5,6,7,8-tetrahydrofolate.

It belongs to the Fmt family.

The enzyme catalyses L-methionyl-tRNA(fMet) + (6R)-10-formyltetrahydrofolate = N-formyl-L-methionyl-tRNA(fMet) + (6S)-5,6,7,8-tetrahydrofolate + H(+). Its function is as follows. Attaches a formyl group to the free amino group of methionyl-tRNA(fMet). The formyl group appears to play a dual role in the initiator identity of N-formylmethionyl-tRNA by promoting its recognition by IF2 and preventing the misappropriation of this tRNA by the elongation apparatus. The polypeptide is Methionyl-tRNA formyltransferase (Solibacter usitatus (strain Ellin6076)).